Consider the following 91-residue polypeptide: UPF0250 protein NMC1112 (91 aa).

It belongs to the UPF0250 family.

This chain is UPF0250 protein NMC1112, found in Neisseria meningitidis serogroup C / serotype 2a (strain ATCC 700532 / DSM 15464 / FAM18).